A 292-amino-acid chain; its full sequence is GID complex substrate-recognition subunit 10 (292 aa).

The protein belongs to the GID4/VID24 family. Substrate-recognition component of the GID/CTLH ubiquitin ligase complex. In the absence of stress, the complex exists as an inactive anticipatory complex (GID(Ant)), composed of VID30/GID1, the E3 ubiquitin-ligase RMD5/GID2, VID28/GID5, GID8, and the RING-like subunit FYV10/GID9, awaiting a substrate receptor to form the active E3 ligase complex. When cells are shifted to glucose-containing medium, the substrate receptor VID24/GID4 is induced and becomes part of the complex, named GID(SR4). Under osmotic or heat stress, the substrate receptor GID10 is induced and becomes part of the complex, named GID(SR10). Interacts with proteins that have an N-terminal Pro/N-degron, including ART2.

Functionally, substrate-recognition component of the GID E3 ligase complex recruiting N termini and catalyzing ubiquitination of proteins targeted for degradation. GID E3 is regulated through assembly with interchangeable N-degron-binding substrate receptors induced by distinct environmental perturbations. Required for the adaptation to osmotic or heat stress. Required for the regulation of protein levels of the adapter protein ART2, a component of the ART-Rsp5 ubiquitin ligase pathway, part of the plasma membrane quality control. Specific for substrates with an N-terminal Pro (Pro/N-degron), including ART2. Has high affinity for the N-terminal sequence Pro-Tyr-Ile-Thr, and also recognizes nonproline residues such as Met-Tyr-Ile-Thr-Val or Val-Cys-Phe-His. In Saccharomyces cerevisiae (strain ATCC 204508 / S288c) (Baker's yeast), this protein is GID complex substrate-recognition subunit 10.